The following is an 865-amino-acid chain: Xylosyltransferase 2 (865 aa).

At 1–15 (MVASARVQKLVRRYK) the chain is on the cytoplasmic side. A helical; Signal-anchor for type II membrane protein membrane pass occupies residues 16–36 (LAIATALAILLLQGLVVWSFS). Residues 37-865 (GLEEDEPGEK…GPVKADGRLR (829 aa)) lie on the Lumenal side of the membrane. Residues 39–157 (EEDEPGEKGR…EGAPQPTDNG (119 aa)) are disordered. Positions 53–65 (RPLDPGEGSKDTD) are enriched in basic and acidic residues. The segment covering 73–82 (SAGRRHGRWR) has biased composition (basic residues). The N-linked (GlcNAc...) asparagine glycan is linked to asparagine 122. Positions 125–137 (GAAAGEALVGAAG) are enriched in low complexity. 4 cysteine pairs are disulfide-bonded: cysteine 162/cysteine 190, cysteine 206/cysteine 448, cysteine 467/cysteine 480, and cysteine 469/cysteine 478. Residues valine 239, aspartate 267, and 296-298 (TIW) contribute to the UDP-alpha-D-xylose site. N-linked (GlcNAc...) asparagine glycosylation is present at asparagine 327. 400-401 (DW) contributes to the UDP-alpha-D-xylose binding site. Residues serine 481 and 504 to 505 (RK) contribute to the UDP-alpha-D-xylose site. 2 disulfides stabilise this stretch: cysteine 581–cysteine 833 and cysteine 826–cysteine 839. Asparagine 683 is a glycosylation site (N-linked (GlcNAc...) asparagine).

This sequence belongs to the glycosyltransferase 14 family. XylT subfamily. Monomer. Mg(2+) serves as cofactor. It depends on Mn(2+) as a cofactor. In terms of processing, contains disulfide bonds.

The protein resides in the golgi apparatus membrane. It localises to the secreted. The enzyme catalyses UDP-alpha-D-xylose + L-seryl-[protein] = 3-O-(beta-D-xylosyl)-L-seryl-[protein] + UDP + H(+). The protein operates within glycan metabolism; chondroitin sulfate biosynthesis. Its pathway is glycan metabolism; heparan sulfate biosynthesis. In terms of biological role, catalyzes the first step in the biosynthesis of chondroitin sulfate, heparan sulfate and dermatan sulfate proteoglycans, such as DCN. Transfers D-xylose from UDP-D-xylose to specific serine residues of the core protein. This is Xylosyltransferase 2 (XYLT2) from Canis lupus familiaris (Dog).